The following is a 248-amino-acid chain: N-acylneuraminate-9-phosphatase (248 aa).

Mg(2+) is bound at residue Asp12. The phosphate site is built by Leu13, Asp14, Thr131, Asn132, and Lys164. Asp14 provides a ligand contact to Mg(2+). Residue Asp189 participates in Mg(2+) binding.

The protein belongs to the HAD-like hydrolase superfamily. NANP family. It depends on Mg(2+) as a cofactor.

The enzyme catalyses N-acetylneuraminate 9-phosphate + H2O = N-acetylneuraminate + phosphate. The catalysed reaction is N-glycoloylneuraminate 9-phosphate + H2O = N-glycoloylneuraminate + phosphate. It participates in amino-sugar metabolism; N-acetylneuraminate biosynthesis. With respect to regulation, inhibited by calcium. Inhibited by vanadate, sodium orthovanadate and phosphonate. Its function is as follows. Catalyzes the dephosphorylation of N-acylneuraminate 9-phosphate (Neu5Ac-9-P) to N-acetylneuraminic acid (Neu5Ac or sialic acid). Can also use N-glycoloylneuraminate 9-phosphate as substrate. The protein is N-acylneuraminate-9-phosphatase of Homo sapiens (Human).